The following is a 110-amino-acid chain: Large ribosomal subunit protein uL22 (110 aa).

This sequence belongs to the universal ribosomal protein uL22 family. As to quaternary structure, part of the 50S ribosomal subunit.

Functionally, this protein binds specifically to 23S rRNA; its binding is stimulated by other ribosomal proteins, e.g. L4, L17, and L20. It is important during the early stages of 50S assembly. It makes multiple contacts with different domains of the 23S rRNA in the assembled 50S subunit and ribosome. Its function is as follows. The globular domain of the protein is located near the polypeptide exit tunnel on the outside of the subunit, while an extended beta-hairpin is found that lines the wall of the exit tunnel in the center of the 70S ribosome. This Idiomarina loihiensis (strain ATCC BAA-735 / DSM 15497 / L2-TR) protein is Large ribosomal subunit protein uL22.